The following is a 198-amino-acid chain: UPF0314 protein Atu8092 (198 aa).

Helical transmembrane passes span 14–34 (LRWFGVAAGLLLLQIVILYAM), 64–84 (WYTPSHIIHGFLFYWFAWLLF), and 150–170 (VPVWLTVVIAIFFEIFTGWLI).

It belongs to the UPF0314 family.

It is found in the cell membrane. This chain is UPF0314 protein Atu8092, found in Agrobacterium fabrum (strain C58 / ATCC 33970) (Agrobacterium tumefaciens (strain C58)).